A 218-amino-acid polypeptide reads, in one-letter code: Small ribosomal subunit protein uS3 (218 aa).

The 69-residue stretch at Val-38–Lys-106 folds into the KH type-2 domain.

The protein belongs to the universal ribosomal protein uS3 family. In terms of assembly, part of the 30S ribosomal subunit. Forms a tight complex with proteins S10 and S14.

Functionally, binds the lower part of the 30S subunit head. Binds mRNA in the 70S ribosome, positioning it for translation. The polypeptide is Small ribosomal subunit protein uS3 (Geobacillus thermodenitrificans (strain NG80-2)).